Reading from the N-terminus, the 445-residue chain is Tubulin alpha-1 chain (445 aa).

Q11 is a GTP binding site. Position 40 is an N6-acetyllysine (K40). GTP-binding residues include E71, S140, G144, T145, T179, N206, and N228. E71 is a binding site for Mg(2+). The active site involves E254.

The protein belongs to the tubulin family. In terms of assembly, dimer of alpha and beta chains. A typical microtubule is a hollow water-filled tube with an outer diameter of 25 nm and an inner diameter of 15 nM. Alpha-beta heterodimers associate head-to-tail to form protofilaments running lengthwise along the microtubule wall with the beta-tubulin subunit facing the microtubule plus end conferring a structural polarity. Microtubules usually have 13 protofilaments but different protofilament numbers can be found in some organisms and specialized cells. It depends on Mg(2+) as a cofactor. Post-translationally, acetylation of alpha chains at Lys-40 stabilizes microtubules and affects affinity and processivity of microtubule motors. This modification has a role in multiple cellular functions, ranging from cell motility, cell cycle progression or cell differentiation to intracellular trafficking and signaling.

The protein resides in the cytoplasm. It is found in the cytoskeleton. It carries out the reaction GTP + H2O = GDP + phosphate + H(+). Functionally, tubulin is the major constituent of microtubules, a cylinder consisting of laterally associated linear protofilaments composed of alpha- and beta-tubulin heterodimers. Microtubules grow by the addition of GTP-tubulin dimers to the microtubule end, where a stabilizing cap forms. Below the cap, tubulin dimers are in GDP-bound state, owing to GTPase activity of alpha-tubulin. The protein is Tubulin alpha-1 chain of Stylonychia lemnae (Ciliate).